A 309-amino-acid polypeptide reads, in one-letter code: MAPSHWRLILNGKSTDNLDLREAVGTLRKRGIQLDVRVTWEDGDAERYVGEAVADGVHTVVAAGGDGTLSEVAAALAHHEGDAATLPSLGLVPLGTANDFATAATLPIAPLEALTLIAERVAQPVDLLRIDADHGPHWCANVASGGFGTQVTVETDEGLKKMLGGLAYLITGMSRLGRIDPISARFSGPEFSWEGEFIALGLGNGRQAGGGQALCPEALIDDGLLDVTIVPDLDGEVAATLGTLVTGGKQAALERVAVRARVPWLDIVSQQPLTLNLDGEPETSRHFRIECVPARLRMHLPGECPLLGG.

The DAGKc domain occupies 1-134; the sequence is MAPSHWRLIL…VDLLRIDADH (134 aa). Residues Thr39, 65–71, and Thr96 contribute to the ATP site; that span reads GDGTLSE. Leu219, Asp222, and Leu224 together coordinate Mg(2+). Glu280 serves as the catalytic Proton acceptor.

This sequence belongs to the diacylglycerol/lipid kinase family. YegS lipid kinase subfamily. Mg(2+) is required as a cofactor. Ca(2+) serves as cofactor.

Its subcellular location is the cytoplasm. In terms of biological role, probably phosphorylates lipids; the in vivo substrate is unknown. This Xanthomonas axonopodis pv. citri (strain 306) protein is Probable lipid kinase YegS-like.